We begin with the raw amino-acid sequence, 61 residues long: Small ribosomal subunit protein uS14B (61 aa).

Residues Cys24, Cys27, Cys40, and Cys43 each coordinate Zn(2+).

It belongs to the universal ribosomal protein uS14 family. Zinc-binding uS14 subfamily. As to quaternary structure, part of the 30S ribosomal subunit. Contacts proteins S3 and S10. Zn(2+) serves as cofactor.

Functionally, binds 16S rRNA, required for the assembly of 30S particles and may also be responsible for determining the conformation of the 16S rRNA at the A site. The protein is Small ribosomal subunit protein uS14B of Lacticaseibacillus paracasei (strain ATCC 334 / BCRC 17002 / CCUG 31169 / CIP 107868 / KCTC 3260 / NRRL B-441) (Lactobacillus paracasei).